The following is a 172-amino-acid chain: Austinoid biosynthesis clusters protein J (172 aa).

It belongs to the trt14 isomerase family. In terms of assembly, homodimer.

It participates in secondary metabolite biosynthesis; terpenoid biosynthesis. Part of the gene cluster B that mediates the biosynthesis of the fungal meroterpenoid acetoxydehydroaustin. The first step of the pathway is the synthesis of 3,5-dimethylorsellinic acid by the polyketide synthase ausA. 3,5-dimethylorsellinic acid is then prenylated by the polyprenyl transferase ausN. Further epoxidation by the FAD-dependent monooxygenase ausM and cyclization by the probable terpene cyclase ausL lead to the formation of protoaustinoid A. Protoaustinoid A is then oxidized to spiro-lactone preaustinoid A3 by the combined action of the FAD-binding monooxygenases ausB and ausC, and the dioxygenase ausE. Acid-catalyzed keto-rearrangement and ring contraction of the tetraketide portion of preaustinoid A3 by ausJ lead to the formation of preaustinoid A4. The aldo-keto reductase ausK, with the help of ausH, is involved in the next step by transforming preaustinoid A4 into isoaustinone which is in turn hydroxylated by the P450 monooxygenase ausI to form austinolide. The cytochrome P450 monooxygenase ausG then modifies austinolide to austinol. Austinol is further acetylated to austin by the O-acetyltransferase ausP, which spontaneously changes to dehydroaustin. The cytochrome P450 monooxygenase then converts dehydroaustin is into 7-dehydrodehydroaustin. The hydroxylation catalyzed by ausR permits the second O-acetyltransferase ausQ to add an additional acetyl group to the molecule, leading to the formation of acetoxydehydroaustin. Due to genetic rearrangements of the clusters and the subsequent loss of some enzymes, the end product of the Penicillium brasilianum austinoid biosynthesis clusters is acetoxydehydroaustin. This is Austinoid biosynthesis clusters protein J from Penicillium brasilianum.